The chain runs to 339 residues: Glycerol-3-phosphate dehydrogenase [NAD(P)+] (339 aa).

Ser15, Tyr16, His36, and Lys110 together coordinate NADPH. Lys110, Gly139, and Thr141 together coordinate sn-glycerol 3-phosphate. Ala143 is a binding site for NADPH. Positions 195, 248, 258, 259, and 260 each coordinate sn-glycerol 3-phosphate. Catalysis depends on Lys195, which acts as the Proton acceptor. Arg259 contacts NADPH. NADPH-binding residues include Val283 and Glu285.

This sequence belongs to the NAD-dependent glycerol-3-phosphate dehydrogenase family.

The protein localises to the cytoplasm. The enzyme catalyses sn-glycerol 3-phosphate + NAD(+) = dihydroxyacetone phosphate + NADH + H(+). The catalysed reaction is sn-glycerol 3-phosphate + NADP(+) = dihydroxyacetone phosphate + NADPH + H(+). Its pathway is membrane lipid metabolism; glycerophospholipid metabolism. Its function is as follows. Catalyzes the reduction of the glycolytic intermediate dihydroxyacetone phosphate (DHAP) to sn-glycerol 3-phosphate (G3P), the key precursor for phospholipid synthesis. This is Glycerol-3-phosphate dehydrogenase [NAD(P)+] from Pectobacterium atrosepticum (strain SCRI 1043 / ATCC BAA-672) (Erwinia carotovora subsp. atroseptica).